The chain runs to 117 residues: Large ribosomal subunit protein bL20 (117 aa).

It belongs to the bacterial ribosomal protein bL20 family.

Binds directly to 23S ribosomal RNA and is necessary for the in vitro assembly process of the 50S ribosomal subunit. It is not involved in the protein synthesizing functions of that subunit. The chain is Large ribosomal subunit protein bL20 from Vibrio metschnikovii.